Reading from the N-terminus, the 1088-residue chain is RNA-directed RNA polymerase (1088 aa).

Residues 501–687 (LSYGDVTRFL…AKRYIAGGKI (187 aa)) form the RdRp catalytic domain.

This sequence belongs to the reoviridae RNA-directed RNA polymerase family. As to quaternary structure, interacts with VP3 (Potential). Interacts with VP2; this interaction activates VP1. Interacts with NSP5; this interaction is probably necessary for the formation of functional virus factories. Interacts with NSP2; this interaction is weak. Mg(2+) is required as a cofactor.

It localises to the virion. It carries out the reaction RNA(n) + a ribonucleoside 5'-triphosphate = RNA(n+1) + diphosphate. In terms of biological role, RNA-directed RNA polymerase that is involved in both transcription and genome replication. Together with VP3 capping enzyme, forms an enzyme complex positioned near the channels situated at each of the five-fold vertices of the core. Following infection, the outermost layer of the virus is lost, leaving a double-layered particle (DLP) made up of the core and VP6 shell. VP1 then catalyzes the transcription of fully conservative plus-strand genomic RNAs that are extruded through the DLP's channels into the cytoplasm where they function as mRNAs for translation of viral proteins. One copy of each of the viral (+)RNAs is also recruited during core assembly, together with newly synthesized polymerase complexes and VP2. The polymerase of these novo-formed particles catalyzes the synthesis of complementary minus-strands leading to dsRNA formation. To do so, the polymerase specifically recognizes and binds 4 bases 5'-UGUG-3' in the conserved 3'-sequence of plus-strand RNA templates. VP2 presumably activates the autoinhibited VP1-RNA complex to coordinate packaging and genome replication. Once dsRNA synthesis is complete, the polymerase switches to the transcriptional mode, thus providing secondary transcription. The sequence is that of RNA-directed RNA polymerase from Homo sapiens (Human).